The chain runs to 110 residues: Class I hydrophobin 2 (110 aa).

Residues 1–19 (MFARAASVFVLSLPILATA) form the signal peptide. 4 disulfides stabilise this stretch: Cys-29–Cys-89, Cys-36–Cys-83, Cys-37–Cys-70, and Cys-90–Cys-103.

This sequence belongs to the fungal hydrophobin family. Self-assembles to form functional amyloid fibrils called rodlets. Self-assembly into fibrillar rodlets occurs spontaneously at hydrophobic:hydrophilic interfaces and the rodlets further associate laterally to form amphipathic monolayers.

It is found in the secreted. It localises to the cell wall. In terms of biological role, aerial growth, conidiation, and dispersal of filamentous fungi in the environment rely upon a capability of their secreting small amphipathic proteins called hydrophobins (HPBs) with low sequence identity. Class I can self-assemble into an outermost layer of rodlet bundles on aerial cell surfaces, conferring cellular hydrophobicity that supports fungal growth, development and dispersal; whereas Class II form highly ordered films at water-air interfaces through intermolecular interactions but contribute nothing to the rodlet structure. Pnh2 is a class I hydrophobin that might be involved in the attachment of the hydrophilic wall of hyphae to the hydrophobic surface of wood under inorganic phosphate (Pi)-deficient conditions and enable the mycelium to degrade efficiently the components of wood and to acquire nutrients containing Pi. This is Class I hydrophobin 2 from Pholiota nameko.